The sequence spans 399 residues: Tryptophan synthase beta chain (399 aa).

Lys92 carries the N6-(pyridoxal phosphate)lysine modification.

It belongs to the TrpB family. In terms of assembly, tetramer of two alpha and two beta chains. Pyridoxal 5'-phosphate is required as a cofactor.

It carries out the reaction (1S,2R)-1-C-(indol-3-yl)glycerol 3-phosphate + L-serine = D-glyceraldehyde 3-phosphate + L-tryptophan + H2O. Its pathway is amino-acid biosynthesis; L-tryptophan biosynthesis; L-tryptophan from chorismate: step 5/5. Its function is as follows. The beta subunit is responsible for the synthesis of L-tryptophan from indole and L-serine. This Legionella pneumophila (strain Paris) protein is Tryptophan synthase beta chain.